Here is a 116-residue protein sequence, read N- to C-terminus: Large ribosomal subunit protein uL22 (116 aa).

Belongs to the universal ribosomal protein uL22 family. Part of the 50S ribosomal subunit.

Functionally, this protein binds specifically to 23S rRNA; its binding is stimulated by other ribosomal proteins, e.g. L4, L17, and L20. It is important during the early stages of 50S assembly. It makes multiple contacts with different domains of the 23S rRNA in the assembled 50S subunit and ribosome. Its function is as follows. The globular domain of the protein is located near the polypeptide exit tunnel on the outside of the subunit, while an extended beta-hairpin is found that lines the wall of the exit tunnel in the center of the 70S ribosome. This is Large ribosomal subunit protein uL22 from Wolbachia pipientis subsp. Culex pipiens (strain wPip).